The chain runs to 945 residues: MLKLLLGDPNARKLKRYLPIVSDINLLEEEISPLTDDELRAKTADFRERLAKVSGLEKQRELLDEILPEVFSVVREASKRVLGMRHFDVQLIGGMVLHEGQIAEMKTGEGKTLVATLPSFLNALTGRGVHVVTVNDYLARRDAEWMGQVHRFLGLSVGLIQQDMTPLERRKNYECDITYATNSELGFDYLRDNMASDMSEIVQRKFQFCIIDEVDSILIDEARTPLIISGQIERPQEKYQKAAEVVASLIRAAEMGKDGIDPEGDYEVDEKQRTCTLTDEGFARSEELLKVNDLYDPKDPWAHYITNALKAKELFVKDVNYIVRNGEAVIVDEFTGRVMPGRRWSDGQHQAIEAKEKLNIQSETQTLASITYQNFFLLYPRLAGMTGTAKTEEVEFEKTYQLETTVIPTNRPRSRNDWVDQVYKTEAGKWRAVANETAEVHKKGRPVLVGTTSVEKSELLSSLLAEEQIPHNLLNAKPENVEREAEIVAQAGRAGAVTIATNMAGRGTDIILGGNSDYMARLKLREVLLPKLVKPEDGHKPPVPLQRRSESSGFGEDKDVTTDNSKPLSASSALGTLYPCVLTEDTEKVLIDLERKLVADWGDRALTAIELEDRISTAAEKAPTNDASIQLMRDAISLVKSEYDVVVQKEEVQVREAGGLHVIGTERHESRRVDNQLRGRAGRQGDLGSTRFFLSLGDNLLRIFGGDRVASLMNAFKVDEDMPIESGMLTRSLESAQKKVETYYYDIRKQVFEYDEVMNNQRRAVYSERRRVLDGFGLKKQVIGYGEKTMEEIVYAYVNPDLPSEEWDLAQLVSKVKEFVYLLNDLKPDQLEGLDIDELKAFLQEQLRNAYDLKEAQIEEQKPGLMKEAERFFILQQIDTLWREHLQAMDALRESVGLRGYGQKDPLIEYKNEGYDMFLEMMTNMRRNVIYSMFMFQPAPESDKE.

Residues glutamine 90, 108-112, and aspartate 509 contribute to the ATP site; that span reads GEGKT. The segment at 533–568 is disordered; the sequence is VKPEDGHKPPVPLQRRSESSGFGEDKDVTTDNSKPL. The span at 547–561 shows a compositional bias: basic and acidic residues; the sequence is RRSESSGFGEDKDVT.

It belongs to the SecA family. Monomer and homodimer. Part of the essential Sec protein translocation apparatus which comprises SecA, SecYEG and auxiliary proteins SecDF. Other proteins may also be involved.

The protein localises to the cell inner membrane. Its subcellular location is the cellular thylakoid membrane. The protein resides in the cytoplasm. It carries out the reaction ATP + H2O + cellular proteinSide 1 = ADP + phosphate + cellular proteinSide 2.. Part of the Sec protein translocase complex. Interacts with the SecYEG preprotein conducting channel. Has a central role in coupling the hydrolysis of ATP to the transfer of proteins into and across the cell membrane, serving as an ATP-driven molecular motor driving the stepwise translocation of polypeptide chains across the membrane. Functionally, probably participates in protein translocation into and across both the cytoplasmic and thylakoid membranes in cyanobacterial cells. The chain is Protein translocase subunit SecA from Prochlorococcus marinus (strain MIT 9211).